A 137-amino-acid chain; its full sequence is Gonadotropin subunit beta-1 (137 aa).

The N-terminal stretch at 1–24 (MYCTHLMTLQLVVMAMLWVTPVRA) is a signal peptide. 5 disulfides stabilise this stretch: C32/C78, C46/C93, C55/C108, C59/C110, and C113/C120. N36 carries an N-linked (GlcNAc...) asparagine glycan.

The protein belongs to the glycoprotein hormones subunit beta family. In terms of assembly, heterodimer of an alpha and a beta chain.

The protein localises to the secreted. Functionally, involved in gametogenesis and steroidogenesis. In Oncorhynchus keta (Chum salmon), this protein is Gonadotropin subunit beta-1 (cgba).